A 134-amino-acid chain; its full sequence is Fatty acid-binding protein 5 (134 aa).

A Nuclear localization signal motif is present at residues 23–33 (KELGVGMAMRK). Hexadecanoate contacts are provided by residues arginine 109 and 129–131 (RVY). The N-eicosanoyl ethanolamine site is built by arginine 109 and tyrosine 131. 129–131 (RVY) is a (9Z,12Z)-octadecadienoate binding site.

This sequence belongs to the calycin superfamily. Fatty-acid binding protein (FABP) family. As to quaternary structure, monomer.

It localises to the cytoplasm. The protein resides in the nucleus. It is found in the synapse. The protein localises to the postsynaptic density. Its subcellular location is the secreted. It catalyses the reaction hexadecanoate(out) = hexadecanoate(in). The catalysed reaction is (9Z,12Z)-octadecadienoate(out) = (9Z,12Z)-octadecadienoate(in). The enzyme catalyses (9Z)-octadecenoate(out) = (9Z)-octadecenoate(in). Functionally, intracellular carrier for long-chain fatty acids and related active lipids, such as endocannabinoids, that regulate the metabolism and actions of the ligands they bind. In addition to the cytosolic transport, selectively delivers specific fatty acids from the cytosol to the nucleus, wherein they activate nuclear receptors. Delivers retinoic acid to the nuclear receptor peroxisome proliferator-activated receptor delta; which promotes proliferation and survival. May also serve as a synaptic carrier of endocannabinoid at central synapses and thus controls retrograde endocannabinoid signaling. Modulates inflammation by regulating PTGES induction via NF-kappa-B activation, and prostaglandin E2 (PGE2) biosynthesis during inflammation. Has the highest binding affinity for docosahexaenoic acid (DHA) and decreasing relative affinity for eicosapentaenoic acid (EPA), alpha-linolenic acid (ALA), oleic acid, palmitic acid, linoleic acid and stearic acid, respectively. The polypeptide is Fatty acid-binding protein 5 (Pygoscelis papua (Gentoo penguin)).